Consider the following 591-residue polypeptide: Protein misato homolog 1 (591 aa).

The protein belongs to the misato family.

It localises to the mitochondrion outer membrane. Its subcellular location is the cytoplasm. In terms of biological role, involved in the regulation of mitochondrial distribution and morphology. Required for mitochondrial fusion and mitochondrial network formation. The chain is Protein misato homolog 1 (msto1) from Danio rerio (Zebrafish).